A 208-amino-acid polypeptide reads, in one-letter code: Small ribosomal subunit protein uS3 (208 aa).

The KH type-2 domain occupies 17–86 (IDEYLEKELR…NPQIEVEEIK (70 aa)).

It belongs to the universal ribosomal protein uS3 family. In terms of assembly, part of the 30S ribosomal subunit.

Its function is as follows. Binds the lower part of the 30S subunit head. The protein is Small ribosomal subunit protein uS3 of Thermococcus onnurineus (strain NA1).